The chain runs to 773 residues: Endonuclease MutS2 (773 aa).

334–341 (GANAGGKT) contacts ATP. Positions 698–773 (VDLRGMRADV…GDGMTMVTLK (76 aa)) constitute a Smr domain.

The protein belongs to the DNA mismatch repair MutS family. MutS2 subfamily. Homodimer. Binds to stalled ribosomes, contacting rRNA.

Functionally, endonuclease that is involved in the suppression of homologous recombination and thus may have a key role in the control of bacterial genetic diversity. Its function is as follows. Acts as a ribosome collision sensor, splitting the ribosome into its 2 subunits. Detects stalled/collided 70S ribosomes which it binds and splits by an ATP-hydrolysis driven conformational change. Acts upstream of the ribosome quality control system (RQC), a ribosome-associated complex that mediates the extraction of incompletely synthesized nascent chains from stalled ribosomes and their subsequent degradation. Probably generates substrates for RQC. This Solidesulfovibrio magneticus (strain ATCC 700980 / DSM 13731 / RS-1) (Desulfovibrio magneticus) protein is Endonuclease MutS2.